Reading from the N-terminus, the 138-residue chain is Small ribosomal subunit protein uS11c (138 aa).

Residues 1 to 23 form a disordered region; sequence MKKPIPRIGSRRNGRIGSRKNGR.

This sequence belongs to the universal ribosomal protein uS11 family. As to quaternary structure, part of the 30S ribosomal subunit.

The protein localises to the plastid. It is found in the chloroplast. This chain is Small ribosomal subunit protein uS11c, found in Amborella trichopoda.